The primary structure comprises 157 residues: Protein SINE4 (157 aa).

The 54-residue stretch at 104–157 folds into the KASH domain; that stretch reads VTSSSDTTKAKKKTTIRRFVSVTMVLLLSWVLVVLMNHFDHLSMNTQIITLVPT. A helical transmembrane segment spans residues 122–142; that stretch reads FVSVTMVLLLSWVLVVLMNHF. Residues 154–157 carry the Required for nuclear localization motif; the sequence is LVPT.

In terms of assembly, interacts with SUN1 and SUN2.

The protein resides in the nucleus membrane. This Arabidopsis thaliana (Mouse-ear cress) protein is Protein SINE4.